Reading from the N-terminus, the 351-residue chain is Signal recognition particle receptor FtsY (351 aa).

Residues 152 to 159 (GVNGSGKT), 235 to 239 (DTAGR), and 299 to 302 (TKMD) contribute to the GTP site.

This sequence belongs to the GTP-binding SRP family. FtsY subfamily. As to quaternary structure, part of the signal recognition particle protein translocation system, which is composed of SRP and FtsY.

It localises to the cell membrane. Its subcellular location is the cytoplasm. The enzyme catalyses GTP + H2O = GDP + phosphate + H(+). Involved in targeting and insertion of nascent membrane proteins into the cytoplasmic membrane. Acts as a receptor for the complex formed by the signal recognition particle (SRP) and the ribosome-nascent chain (RNC). This Metamycoplasma hominis (strain ATCC 23114 / DSM 25592 / NBRC 14850 / NCTC 10111 / PG21) (Mycoplasma hominis) protein is Signal recognition particle receptor FtsY.